We begin with the raw amino-acid sequence, 397 residues long: Bifunctional enzyme IspD/IspF (397 aa).

A 2-C-methyl-D-erythritol 4-phosphate cytidylyltransferase region spans residues 1-233 (MCAKKYKIAA…KLLFEEPKFR (233 aa)). The interval 233–397 (RVGAGYDIHK…VLLHTNFYWK (165 aa)) is 2-C-methyl-D-erythritol 2,4-cyclodiphosphate synthase. A divalent metal cation-binding residues include aspartate 239 and histidine 241. 4-CDP-2-C-methyl-D-erythritol 2-phosphate-binding positions include 239–241 (DIH) and 270–271 (HS). An a divalent metal cation-binding site is contributed by histidine 278. 4-CDP-2-C-methyl-D-erythritol 2-phosphate-binding positions include 292–294 (DIG), 368–371 (TTAE), tyrosine 375, and arginine 378.

This sequence in the N-terminal section; belongs to the IspD/TarI cytidylyltransferase family. IspD subfamily. It in the C-terminal section; belongs to the IspF family. A divalent metal cation is required as a cofactor.

It carries out the reaction 2-C-methyl-D-erythritol 4-phosphate + CTP + H(+) = 4-CDP-2-C-methyl-D-erythritol + diphosphate. The enzyme catalyses 4-CDP-2-C-methyl-D-erythritol 2-phosphate = 2-C-methyl-D-erythritol 2,4-cyclic diphosphate + CMP. It functions in the pathway isoprenoid biosynthesis; isopentenyl diphosphate biosynthesis via DXP pathway; isopentenyl diphosphate from 1-deoxy-D-xylulose 5-phosphate: step 2/6. The protein operates within isoprenoid biosynthesis; isopentenyl diphosphate biosynthesis via DXP pathway; isopentenyl diphosphate from 1-deoxy-D-xylulose 5-phosphate: step 4/6. Bifunctional enzyme that catalyzes the formation of 4-diphosphocytidyl-2-C-methyl-D-erythritol from CTP and 2-C-methyl-D-erythritol 4-phosphate (MEP) (IspD), and catalyzes the conversion of 4-diphosphocytidyl-2-C-methyl-D-erythritol 2-phosphate (CDP-ME2P) to 2-C-methyl-D-erythritol 2,4-cyclodiphosphate (ME-CPP) with a corresponding release of cytidine 5-monophosphate (CMP) (IspF). The protein is Bifunctional enzyme IspD/IspF of Wolbachia pipientis wMel.